A 60-amino-acid chain; its full sequence is Potassium channel toxin alpha-KTx 15.8 (60 aa).

Residues 1–22 form the signal peptide; sequence MKFSSIILLTLLICSMSIFGNC. The residue at position 23 (Gln23) is a Pyrrolidone carboxylic acid. 3 disulfides stabilise this stretch: Cys30–Cys50, Cys35–Cys55, and Cys39–Cys57.

This sequence belongs to the short scorpion toxin superfamily. Potassium channel inhibitor family. Alpha-KTx 15 subfamily. In terms of tissue distribution, expressed by the venom gland.

The protein localises to the secreted. Its function is as follows. Blocker of A-type voltage-gated potassium channels of cerebellar granular cells. May also inhibit Kv4/KCND when coexpressed with DPP6 or DPP10. The occlusion of the outer entry of the K(+) conducting pore is partially reversible and affects both open and closed channels. It shares the same target in rat brain than BmTX3 (AC Q8I0L5) and AmmTX3 (AC P60208). Also shows a weak inhibition on Kv1.2/KCNA2 and Kv1.3/KCNA3 voltage-gated potassium channels. This is Potassium channel toxin alpha-KTx 15.8 from Olivierus martensii (Manchurian scorpion).